The chain runs to 787 residues: Phenylalanine--tRNA ligase beta subunit (787 aa).

The 111-residue stretch at Ala-39–Arg-149 folds into the tRNA-binding domain. Residues Pro-400–Asp-475 form the B5 domain. Residues Asp-453, Asp-459, Glu-462, and Glu-463 each coordinate Mg(2+). Residues Ser-694–Arg-786 enclose the FDX-ACB domain.

This sequence belongs to the phenylalanyl-tRNA synthetase beta subunit family. Type 1 subfamily. Tetramer of two alpha and two beta subunits. The cofactor is Mg(2+).

Its subcellular location is the cytoplasm. It carries out the reaction tRNA(Phe) + L-phenylalanine + ATP = L-phenylalanyl-tRNA(Phe) + AMP + diphosphate + H(+). The chain is Phenylalanine--tRNA ligase beta subunit (pheT) from Neisseria meningitidis serogroup B (strain ATCC BAA-335 / MC58).